Here is a 644-residue protein sequence, read N- to C-terminus: MPRNAEAPAKGTTADDFAPTQWNIIYLLMTVGALMAALSISIQPLLLDKIFGIAFEKEGAVNADIQVVAEIVSIVCVGWFGLLSDRIGRVRIIALGFLIAVVGAAVSLLSLQVGLAFGAAGLVLFYLTRVLLTVGADTVQLQLSTLVGDVSSRANRPRLMGNLVFMMVFGGTMLAAIVMQMADYPGGVFLIMCLPLLAGIAGFQLTRRNLRDVAPPQPASEDDEHPLRQVWTVITSDPRMQLAFAAAFYTRADVIILSLFFSLWCISVSDLVGVTRTFATAHAAVMIGLLGLAVLAAVPLWRSFIERHSRISAIGASLSLAALGYIWLGMFANPFNWLVALPLLMVGIGHAGCFVTLQVLTVDASPKPILGAMVGAGYLVGGLGTVMLVQSGGYYFDALGPRAPFILMGTGKMLVTLYAAWLLANGIDETCDHHLKSARTVDWKPLVFLTAALPFVWLVGRSVIEGYISNGSLGEAPVGFVNRYLGDWAFTFLIISLAMRPVQEITGIKTLAKYRRMIGLFAFFYAVMHVLAYVALEWALNLGDMMGDIYKRPFILLGLVAFALLIPLAFTSANSQIKRIGGKRWKKLHSATYVINALVALHFILAANHENGEPYVYAAAVIVLLWYRFHQWRGGNVLRALRIG.

Residues 1–427 (MPRNAEAPAK…YAAWLLANGI (427 aa)) form a major facilitator domain region. The next 18 helical transmembrane spans lie at 22–42 (WNII…SISI), 63–83 (ADIQ…FGLL), 92–112 (IIAL…LSLQ), 113–133 (VGLA…VLLT), 159–179 (LMGN…AIVM), 185–205 (PGGV…GFQL), 254–274 (VIIL…LVGV), 281–301 (AHAA…VPLW), 311–331 (ISAI…LGMF), 337–357 (WLVA…FVTL), 369–389 (ILGA…VMLV), 403–423 (APFI…AWLL), 440–460 (TVDW…WLVG), 478–498 (VGFV…ISLA), 518–538 (IGLF…ALEW), 553–573 (PFIL…FTSA), 588–608 (LHSA…LAAN), and 612–629 (GEPY…WYRF). The segment at 488-599 (WAFTFLIISL…SATYVINALV (112 aa)) is ferric reductase-like domain.

The protein in the N-terminal section; belongs to the major facilitator superfamily.

Its subcellular location is the magnetosome membrane. Required for correct biomineralization of the magnetosome; probably converts and then transports some form of iron. It is partially functionally redundant with MamH. May function with MamX, MamY amd Mms6. The sequence is that of Magnetosome protein MamZ from Paramagnetospirillum magneticum (strain ATCC 700264 / AMB-1) (Magnetospirillum magneticum).